The chain runs to 72 residues: Protein CYSTEINE-RICH TRANSMEMBRANE MODULE 1 (72 aa).

Over residues 1–11 (MSQYDHNQSAG) the composition is skewed to polar residues. The interval 1–46 (MSQYDHNQSAGANPPPPMSTCTSPPPPIGYPTNQPSHGSVAQGKVE) is disordered. The segment covering 13 to 29 (NPPPPMSTCTSPPPPIG) has biased composition (pro residues). A helical membrane pass occupies residues 49–65 (SKGDGFFKGCLAAMCCC).

This sequence belongs to the CYSTM1 family. As to quaternary structure, heterodimers. Binds weakly to CYSTM7 and WIH1/CYSTM13. Mostly expressed in roots, flowers and siliques and, to a lower extent, in stems and leaves.

It localises to the cell membrane. Its subcellular location is the nucleus. May be involved in aluminium (Al) tolerance. Involved in resistance to abiotic stress. The sequence is that of Protein CYSTEINE-RICH TRANSMEMBRANE MODULE 1 from Arabidopsis thaliana (Mouse-ear cress).